Consider the following 325-residue polypeptide: UPF0285 protein MmarC7_1666 (325 aa).

It belongs to the UPF0285 family.

This chain is UPF0285 protein MmarC7_1666, found in Methanococcus maripaludis (strain C7 / ATCC BAA-1331).